The primary structure comprises 300 residues: tRNA pseudouridine synthase B (300 aa).

The active-site Nucleophile is the Asp47.

It belongs to the pseudouridine synthase TruB family. Type 1 subfamily.

The catalysed reaction is uridine(55) in tRNA = pseudouridine(55) in tRNA. Responsible for synthesis of pseudouridine from uracil-55 in the psi GC loop of transfer RNAs. In Azoarcus sp. (strain BH72), this protein is tRNA pseudouridine synthase B.